Here is a 390-residue protein sequence, read N- to C-terminus: GTPase Obg/CgtA (390 aa).

The Obg domain occupies 1 to 159; the sequence is MKFVDEAVIK…RDIRLELLLL (159 aa). Residues 160–333 form the OBG-type G domain; it reads ADVGMLGMPN…LCMKLAEFMD (174 aa). Residues 166–173, 191–195, 213–216, 283–286, and 314–316 contribute to the GTP site; these read GMPNAGKS, FTTLV, DIPG, NKVD, and SAA. Mg(2+) is bound by residues S173 and T193.

This sequence belongs to the TRAFAC class OBG-HflX-like GTPase superfamily. OBG GTPase family. In terms of assembly, monomer. Interacts with SpoT (AC Q9KNM2) in a yeast 2-hybrid assay. Requires Mg(2+) as cofactor.

The protein resides in the cytoplasm. Functionally, depletion experiments lead to gene down regulation and a dramatic increase in ppGpp levels, like those seen in the stringent response. There is no change in cell morphology in depletion experiments, but cells are very sensitive to the DNA-damaging agent hydroxyurea and are very elongated. Overexpression reduces growth and leads to elongated cells. Overexpression of proteins with C-terminal deletions of 29 or 62 amino acids showed fewer elongated cells. In terms of biological role, an essential GTPase which binds GTP, GDP and possibly (p)ppGpp with moderate affinity, with high nucleotide exchange rates and a fairly low GTP hydrolysis rate. It may play a role in control of the cell cycle, stress response, ribosome biogenesis and in those bacteria that undergo differentiation, in morphogenesis control. GTPase activity is stimulated by 50S ribosomal subunits. The protein is GTPase Obg/CgtA of Vibrio cholerae serotype O1 (strain ATCC 39315 / El Tor Inaba N16961).